The primary structure comprises 274 residues: 4-deoxy-L-threo-5-hexosulose-uronate ketol-isomerase (274 aa).

Zn(2+) is bound by residues histidine 192, histidine 194, glutamate 199, and histidine 241.

It belongs to the KduI family. The cofactor is Zn(2+).

The catalysed reaction is 5-dehydro-4-deoxy-D-glucuronate = 3-deoxy-D-glycero-2,5-hexodiulosonate. The protein operates within glycan metabolism; pectin degradation; 2-dehydro-3-deoxy-D-gluconate from pectin: step 4/5. Catalyzes the isomerization of 5-dehydro-4-deoxy-D-glucuronate to 3-deoxy-D-glycero-2,5-hexodiulosonate. In Shigella boydii serotype 18 (strain CDC 3083-94 / BS512), this protein is 4-deoxy-L-threo-5-hexosulose-uronate ketol-isomerase.